The chain runs to 251 residues: 2,3-bisphosphoglycerate-dependent phosphoglycerate mutase (251 aa).

Substrate is bound by residues 11 to 18 (RHGESDWN), 24 to 25 (TG), Arg63, 90 to 93 (ERHY), Lys101, 117 to 118 (RR), and 184 to 185 (GN). Residue His12 is the Tele-phosphohistidine intermediate of the active site. Catalysis depends on Glu90, which acts as the Proton donor/acceptor.

It belongs to the phosphoglycerate mutase family. BPG-dependent PGAM subfamily.

The catalysed reaction is (2R)-2-phosphoglycerate = (2R)-3-phosphoglycerate. It participates in carbohydrate degradation; glycolysis; pyruvate from D-glyceraldehyde 3-phosphate: step 3/5. Functionally, catalyzes the interconversion of 2-phosphoglycerate and 3-phosphoglycerate. This is 2,3-bisphosphoglycerate-dependent phosphoglycerate mutase from Mycobacterium marinum (strain ATCC BAA-535 / M).